The sequence spans 396 residues: Probable arginine kinase F46H5.3 (396 aa).

The Phosphagen kinase N-terminal domain maps to 47–129; that stretch reads KIEEGYAKLQ…FDPLIQDYHN (83 aa). 102–106 serves as a coordination point for substrate; it reads GVGVY. A Phosphagen kinase C-terminal domain is found at 159–396; it reads FINSTRIRCG…AHLIALEKAA (238 aa). ATP-binding positions include 162–166 and H226; that span reads STRIR. E266 is a substrate binding site. Position 270 (R270) interacts with ATP. Position 312 (C312) interacts with substrate. ATP contacts are provided by residues 321–325, 349–354, and D364; these read RASVH and RGIHGE. E354 provides a ligand contact to substrate.

The protein belongs to the ATP:guanido phosphotransferase family.

The catalysed reaction is L-arginine + ATP = N(omega)-phospho-L-arginine + ADP + H(+). The polypeptide is Probable arginine kinase F46H5.3 (Caenorhabditis elegans).